A 311-amino-acid polypeptide reads, in one-letter code: uncharacterized protein (311 aa).

Transmembrane regions (helical) follow at residues 13 to 33 (STAV…GFFS), 41 to 61 (FELV…CWLA), 76 to 96 (LQTL…FKSF), 103 to 123 (IAIS…SFFY), 128 to 148 (NVIS…ISGI), 157 to 177 (LMGS…FTTL), 192 to 212 (FLQT…GAFA), 218 to 238 (NWIM…LLFF), 248 to 268 (FISI…TVFT), and 272 to 292 (PDLY…LTLV). EamA domains follow at residues 24 to 147 (VIFG…LISG) and 166 to 292 (VLAA…LTLV).

The protein belongs to the EamA transporter family.

The protein resides in the cell membrane. This is an uncharacterized protein from Bacillus subtilis (strain 168).